A 363-amino-acid polypeptide reads, in one-letter code: tRNA/tmRNA (uracil-C(5))-methyltransferase (363 aa).

S-adenosyl-L-methionine-binding residues include Q187, Y215, N220, E236, and D296. The active-site Nucleophile is the C321. The Proton acceptor role is filled by E355.

This sequence belongs to the class I-like SAM-binding methyltransferase superfamily. RNA M5U methyltransferase family. TrmA subfamily.

It carries out the reaction uridine(54) in tRNA + S-adenosyl-L-methionine = 5-methyluridine(54) in tRNA + S-adenosyl-L-homocysteine + H(+). The enzyme catalyses uridine(341) in tmRNA + S-adenosyl-L-methionine = 5-methyluridine(341) in tmRNA + S-adenosyl-L-homocysteine + H(+). Functionally, dual-specificity methyltransferase that catalyzes the formation of 5-methyluridine at position 54 (m5U54) in all tRNAs, and that of position 341 (m5U341) in tmRNA (transfer-mRNA). This is tRNA/tmRNA (uracil-C(5))-methyltransferase from Pseudomonas paraeruginosa (strain DSM 24068 / PA7) (Pseudomonas aeruginosa (strain PA7)).